The following is a 443-amino-acid chain: Phosphoglucosamine mutase (443 aa).

The active-site Phosphoserine intermediate is the Ser-101. Residues Ser-101, Asp-240, Asp-242, and Asp-244 each contribute to the Mg(2+) site. Ser-101 carries the post-translational modification Phosphoserine.

This sequence belongs to the phosphohexose mutase family. The cofactor is Mg(2+). Post-translationally, activated by phosphorylation.

It carries out the reaction alpha-D-glucosamine 1-phosphate = D-glucosamine 6-phosphate. In terms of biological role, catalyzes the conversion of glucosamine-6-phosphate to glucosamine-1-phosphate. The chain is Phosphoglucosamine mutase from Psychromonas ingrahamii (strain DSM 17664 / CCUG 51855 / 37).